The following is a 430-amino-acid chain: Dihydroorotase (430 aa).

His-57 and His-59 together coordinate Zn(2+). Residues 59–61 and Asn-91 contribute to the substrate site; that span reads HLR. Residues Asp-151, His-178, and His-231 each contribute to the Zn(2+) site. Position 277 (Asn-277) interacts with substrate. Asp-304 serves as a coordination point for Zn(2+). The active site involves Asp-304. Substrate-binding positions include His-308 and 322-323; that span reads PG.

The protein belongs to the metallo-dependent hydrolases superfamily. DHOase family. Class I DHOase subfamily. The cofactor is Zn(2+).

It carries out the reaction (S)-dihydroorotate + H2O = N-carbamoyl-L-aspartate + H(+). The protein operates within pyrimidine metabolism; UMP biosynthesis via de novo pathway; (S)-dihydroorotate from bicarbonate: step 3/3. Catalyzes the reversible cyclization of carbamoyl aspartate to dihydroorotate. The sequence is that of Dihydroorotase from Mycobacterium leprae (strain TN).